We begin with the raw amino-acid sequence, 1096 residues long: Protein transport protein SEC24 B (1096 aa).

The segment at 1-315 is disordered; it reads MAAPVPPGAY…SAPGTPGSIY (315 aa). Residues 12-23 are compositionally biased toward low complexity; the sequence is PNNNQQNSGGPP. The segment covering 27-45 has biased composition (polar residues); the sequence is PGSQGNPNSLAANMQNLNI. Residues 47–64 show a composition bias toward pro residues; it reads RPPPPMPGSGPRPSPPFG. Positions 65-78 are enriched in low complexity; it reads QSPQSFPQQQQQQP. Residues 79–92 show a composition bias toward pro residues; sequence RPSPMARPGPPPPA. A compositionally biased stretch (low complexity) spans 93–107; sequence AMARPGGPPQVSQPG. Pro residues predominate over residues 108–122; sequence GFPPVGRPVAPPSNQ. Residues 140–149 show a composition bias toward low complexity; the sequence is SFPQPGGFPA. Pro residues-rich tracts occupy residues 150 to 160, 171 to 186, 246 to 258, and 287 to 303; these read SGPPGGVPSGP, SPPP…PPSG, MAPP…PPNA, and GRPP…PPQQ. Zn(2+) is bound by residues Cys-433, Cys-436, Cys-455, and Cys-458. The segment at 433-458 is zinc finger-like; the sequence is CSRCKGYVNPFMKFIDQGRKFICNLC.

The protein belongs to the SEC23/SEC24 family. SEC24 subfamily. In terms of assembly, component of the coat protein complex II (COPII), composed of at least five proteins: the Sec23/24 complex, the Sec13/31 complex and Sar1. Mainly expressed in pollen, roots, stems, petioles and hypocotyls, and, to a lower extent, in leaves and cotyledons.

The protein localises to the cytoplasmic vesicle. It localises to the COPII-coated vesicle membrane. Its subcellular location is the endoplasmic reticulum membrane. It is found in the golgi apparatus membrane. In terms of biological role, component of the coat protein complex II (COPII), that covers ER-derived vesicles involved in transport from the endoplasmic reticulum to the Golgi apparatus. COPII is composed of at least five proteins: the SEC23/24 complex, the SEC13/31 complex, and the protein SAR1. Acts in the cytoplasm to promote the transport of secretory, plasma membrane, and vacuolar proteins from the endoplasmic reticulum to the Golgi complex. In Arabidopsis thaliana (Mouse-ear cress), this protein is Protein transport protein SEC24 B.